The chain runs to 96 residues: MKIRPLHDRVIVKRLEAERKTASGIVIPDSAGEKPDQGEVLAVGNGKILDDGKVRPMAVKVGDKVLFGKYAGQTVKVEGDELLVMREEDIMGVVEA.

Belongs to the GroES chaperonin family. As to quaternary structure, heptamer of 7 subunits arranged in a ring. Interacts with the chaperonin GroEL.

It localises to the cytoplasm. Its function is as follows. Together with the chaperonin GroEL, plays an essential role in assisting protein folding. The GroEL-GroES system forms a nano-cage that allows encapsulation of the non-native substrate proteins and provides a physical environment optimized to promote and accelerate protein folding. GroES binds to the apical surface of the GroEL ring, thereby capping the opening of the GroEL channel. The protein is Co-chaperonin GroES of Aromatoleum aromaticum (strain DSM 19018 / LMG 30748 / EbN1) (Azoarcus sp. (strain EbN1)).